A 667-amino-acid chain; its full sequence is tRNA 5-methylaminomethyl-2-thiouridine biosynthesis bifunctional protein MnmC (667 aa).

Residues 1–12 (MSKQQAPNTTGI) are compositionally biased toward polar residues. The tract at residues 1-20 (MSKQQAPNTTGIGTADLQWH) is disordered. The tract at residues 1–240 (MSKQQAPNTT…KRECLRGVLE (240 aa)) is tRNA (mnm(5)s(2)U34)-methyltransferase. Positions 268-667 (IGAGIAGAAC…LVRSLKKPPL (400 aa)) are FAD-dependent cmnm(5)s(2)U34 oxidoreductase.

The protein in the N-terminal section; belongs to the methyltransferase superfamily. tRNA (mnm(5)s(2)U34)-methyltransferase family. In the C-terminal section; belongs to the DAO family. FAD serves as cofactor.

The protein localises to the cytoplasm. It carries out the reaction 5-aminomethyl-2-thiouridine(34) in tRNA + S-adenosyl-L-methionine = 5-methylaminomethyl-2-thiouridine(34) in tRNA + S-adenosyl-L-homocysteine + H(+). Catalyzes the last two steps in the biosynthesis of 5-methylaminomethyl-2-thiouridine (mnm(5)s(2)U) at the wobble position (U34) in tRNA. Catalyzes the FAD-dependent demodification of cmnm(5)s(2)U34 to nm(5)s(2)U34, followed by the transfer of a methyl group from S-adenosyl-L-methionine to nm(5)s(2)U34, to form mnm(5)s(2)U34. The sequence is that of tRNA 5-methylaminomethyl-2-thiouridine biosynthesis bifunctional protein MnmC from Magnetococcus marinus (strain ATCC BAA-1437 / JCM 17883 / MC-1).